Reading from the N-terminus, the 296-residue chain is UDP-N-acetylenolpyruvoylglucosamine reductase (296 aa).

An FAD-binding PCMH-type domain is found at 19–203 (KVGGFAEYFS…LETTQKNLKK (185 aa)). The active site involves arginine 166. The Proton donor role is filled by serine 217. Residue glutamate 287 is part of the active site.

It belongs to the MurB family. The cofactor is FAD.

The protein localises to the cytoplasm. The enzyme catalyses UDP-N-acetyl-alpha-D-muramate + NADP(+) = UDP-N-acetyl-3-O-(1-carboxyvinyl)-alpha-D-glucosamine + NADPH + H(+). The protein operates within cell wall biogenesis; peptidoglycan biosynthesis. Cell wall formation. The sequence is that of UDP-N-acetylenolpyruvoylglucosamine reductase from Prochlorococcus marinus subsp. pastoris (strain CCMP1986 / NIES-2087 / MED4).